A 273-amino-acid chain; its full sequence is MTDKYAVFGNPIAQSKSPMIHTEFAKQTQQNMSYSAVLAPVEGFAASIKSFFASGGRGANVTAPFKEQAFSLCDELSELAQLAGAVNTLVRLEDGRLRGDNTDGLGLVADIERRLTSLKDKRVLLVGAGGAARGCILPLLQAGVAQLDITNRTHDKALQLAQLFSRYGNIKALTLTELASGYDVIINSSSAGLTGQLISLPSTIIDGTTYCYDMSYGSDTTLFNQWALSAGACHCCDGLGMLVGQAAQSFYLWRNVHPDATTVMQQLRDALGR.

Residues Ser15 to Ser17 and Thr62 contribute to the shikimate site. The active-site Proton acceptor is the Lys66. NADP(+) is bound at residue Glu78. Residues Asn87 and Asp103 each contribute to the shikimate site. NADP(+)-binding positions include Gly127–Ala131, Asn151–Lys156, and Met214. Shikimate is bound at residue Tyr216. Gly238 provides a ligand contact to NADP(+).

It belongs to the shikimate dehydrogenase family. Homodimer.

The enzyme catalyses shikimate + NADP(+) = 3-dehydroshikimate + NADPH + H(+). Its pathway is metabolic intermediate biosynthesis; chorismate biosynthesis; chorismate from D-erythrose 4-phosphate and phosphoenolpyruvate: step 4/7. Functionally, involved in the biosynthesis of the chorismate, which leads to the biosynthesis of aromatic amino acids. Catalyzes the reversible NADPH linked reduction of 3-dehydroshikimate (DHSA) to yield shikimate (SA). The sequence is that of Shikimate dehydrogenase (NADP(+)) from Shewanella denitrificans (strain OS217 / ATCC BAA-1090 / DSM 15013).